The chain runs to 479 residues: Aryl-phospho-beta-D-glucosidase BglA (479 aa).

Glu-176 functions as the Proton donor in the catalytic mechanism. The Nucleophile role is filled by Glu-377.

It belongs to the glycosyl hydrolase 1 family.

It catalyses the reaction 6-phospho-beta-D-glucosyl-(1-&gt;4)-D-glucose + H2O = D-glucose 6-phosphate + D-glucose. Its function is as follows. Catalyzes the hydrolysis of aryl-phospho-beta-D-glucosides such as 4-methylumbelliferyl-phospho-beta-D-glucopyranoside (MUG-P), phosphoarbutin and phosphosalicin. Plays a major role in the utilization of arbutin or salicin as the sole carbon source. BglA and BglH are the major proteins contributing to hydrolysis of MUG-P by extracts of late-exponential-phase or stationary-phase B.subtilis cells. This is Aryl-phospho-beta-D-glucosidase BglA (bglA) from Bacillus subtilis (strain 168).